A 329-amino-acid chain; its full sequence is Dapdiamide synthesis protein DdaC (329 aa).

Requires Fe(2+) as cofactor.

The protein operates within antibiotic biosynthesis. Involved in dapdiamide antibiotics biosynthesis. Catalyzes the alpha-ketoglutarate-dependent epoxidation of the covalently bound N-beta-fumaramoyl-DAP-S-DdaD to generate N-beta-epoxysuccinamoyl-DAP in thioester linkage to DdaD. In Enterobacter agglomerans (Erwinia herbicola), this protein is Dapdiamide synthesis protein DdaC.